Reading from the N-terminus, the 73-residue chain is MAVEKVNSSSSLAEVIDRILDKGIVIDAWVRVSLVGIELLSIEARIVIASVETYLRYAEAVGLTSQAAVPSAA.

The protein belongs to the gas vesicle GvpA family. In terms of assembly, the gas vesicle shell is 2 nm thick and consists of a single layer of this protein. It forms helical ribs nearly perpendicular to the long axis of the vesicle.

Its subcellular location is the gas vesicle shell. Its function is as follows. Gas vesicles are hollow, gas filled proteinaceous nanostructures found in some microorganisms. During planktonic growth they allow positioning of the organism at a favorable depth for light or nutrient acquisition. GvpA forms the protein shell. The sequence is that of Gas vesicle protein A from Nostoc punctiforme (strain ATCC 29133 / PCC 73102).